A 265-amino-acid polypeptide reads, in one-letter code: Ribosomal RNA small subunit methyltransferase A (265 aa).

Histidine 17, leucine 19, glycine 44, glutamate 65, aspartate 90, and asparagine 112 together coordinate S-adenosyl-L-methionine.

It belongs to the class I-like SAM-binding methyltransferase superfamily. rRNA adenine N(6)-methyltransferase family. RsmA subfamily.

It is found in the cytoplasm. It carries out the reaction adenosine(1518)/adenosine(1519) in 16S rRNA + 4 S-adenosyl-L-methionine = N(6)-dimethyladenosine(1518)/N(6)-dimethyladenosine(1519) in 16S rRNA + 4 S-adenosyl-L-homocysteine + 4 H(+). Its function is as follows. Specifically dimethylates two adjacent adenosines (A1518 and A1519) in the loop of a conserved hairpin near the 3'-end of 16S rRNA in the 30S particle. May play a critical role in biogenesis of 30S subunits. In Xylella fastidiosa (strain Temecula1 / ATCC 700964), this protein is Ribosomal RNA small subunit methyltransferase A.